The primary structure comprises 325 residues: Cytochrome c biogenesis protein CcsA (325 aa).

The next 8 membrane-spanning stretches (helical) occupy residues 14–34 (TFAI…FPNL), 36–56 (GLPA…AALL), 68–88 (ISNL…IHLL), 97–117 (LVGA…AFTL), 142–162 (VMMV…AFLV), 233–253 (VIGL…VWAN), 260–280 (WSWD…AAYL), and 294–314 (AILA…VNLL).

Belongs to the CcmF/CycK/Ccl1/NrfE/CcsA family. As to quaternary structure, may interact with ccs1.

It localises to the cellular thylakoid membrane. In terms of biological role, required during biogenesis of c-type cytochromes (cytochrome c6 and cytochrome f) at the step of heme attachment. The chain is Cytochrome c biogenesis protein CcsA from Synechococcus sp. (strain ATCC 27144 / PCC 6301 / SAUG 1402/1) (Anacystis nidulans).